We begin with the raw amino-acid sequence, 482 residues long: tRNA sulfurtransferase (482 aa).

The THUMP domain occupies 61 to 165 (LAIRDALTRI…DDRLLLIKGR (105 aa)). Residues 183–184 (LI), Lys-265, Gly-287, and Gln-296 each bind ATP. Residues Cys-344 and Cys-456 are joined by a disulfide bond. The region spanning 404–482 (FGPNDVILDI…GFNNVKVYRP (79 aa)) is the Rhodanese domain. Cys-456 serves as the catalytic Cysteine persulfide intermediate.

It belongs to the ThiI family.

The protein resides in the cytoplasm. It carries out the reaction [ThiI sulfur-carrier protein]-S-sulfanyl-L-cysteine + a uridine in tRNA + 2 reduced [2Fe-2S]-[ferredoxin] + ATP + H(+) = [ThiI sulfur-carrier protein]-L-cysteine + a 4-thiouridine in tRNA + 2 oxidized [2Fe-2S]-[ferredoxin] + AMP + diphosphate. The catalysed reaction is [ThiS sulfur-carrier protein]-C-terminal Gly-Gly-AMP + S-sulfanyl-L-cysteinyl-[cysteine desulfurase] + AH2 = [ThiS sulfur-carrier protein]-C-terminal-Gly-aminoethanethioate + L-cysteinyl-[cysteine desulfurase] + A + AMP + 2 H(+). It functions in the pathway cofactor biosynthesis; thiamine diphosphate biosynthesis. Catalyzes the ATP-dependent transfer of a sulfur to tRNA to produce 4-thiouridine in position 8 of tRNAs, which functions as a near-UV photosensor. Also catalyzes the transfer of sulfur to the sulfur carrier protein ThiS, forming ThiS-thiocarboxylate. This is a step in the synthesis of thiazole, in the thiamine biosynthesis pathway. The sulfur is donated as persulfide by IscS. This Shigella sonnei (strain Ss046) protein is tRNA sulfurtransferase.